The sequence spans 379 residues: Chaperone protein DnaJ (379 aa).

One can recognise a J domain in the interval 5 to 69 (DYYEVLGISK…NKRASYDQFG (65 aa)). The CR-type zinc-finger motif lies at 136-218 (GTTKEISIRK…CHGKGTENKT (83 aa)). Zn(2+)-binding residues include C149, C152, C166, C169, C192, C195, C206, and C209. CXXCXGXG motif repeat units follow at residues 149 to 156 (CETCHGDG), 166 to 173 (CSYCNGAG), 192 to 199 (CPKCNGSG), and 206 to 213 (CPTCHGKG).

Belongs to the DnaJ family. As to quaternary structure, homodimer. It depends on Zn(2+) as a cofactor.

Its subcellular location is the cytoplasm. Participates actively in the response to hyperosmotic and heat shock by preventing the aggregation of stress-denatured proteins and by disaggregating proteins, also in an autonomous, DnaK-independent fashion. Unfolded proteins bind initially to DnaJ; upon interaction with the DnaJ-bound protein, DnaK hydrolyzes its bound ATP, resulting in the formation of a stable complex. GrpE releases ADP from DnaK; ATP binding to DnaK triggers the release of the substrate protein, thus completing the reaction cycle. Several rounds of ATP-dependent interactions between DnaJ, DnaK and GrpE are required for fully efficient folding. Also involved, together with DnaK and GrpE, in the DNA replication of plasmids through activation of initiation proteins. The chain is Chaperone protein DnaJ from Staphylococcus aureus (strain bovine RF122 / ET3-1).